A 99-amino-acid chain; its full sequence is Small integral membrane protein 14 (99 aa).

Residues M1–S49 lie on the Lumenal side of the membrane. A helical membrane pass occupies residues G50–L70. Over R71 to D99 the chain is Cytoplasmic. The disordered stretch occupies residues G77–D99.

In terms of tissue distribution, ubiquitously expressed.

The protein localises to the endoplasmic reticulum membrane. The chain is Small integral membrane protein 14 (Smim14) from Mus musculus (Mouse).